We begin with the raw amino-acid sequence, 85 residues long: Exodeoxyribonuclease 7 small subunit (85 aa).

Belongs to the XseB family. Heterooligomer composed of large and small subunits.

It localises to the cytoplasm. It catalyses the reaction Exonucleolytic cleavage in either 5'- to 3'- or 3'- to 5'-direction to yield nucleoside 5'-phosphates.. Bidirectionally degrades single-stranded DNA into large acid-insoluble oligonucleotides, which are then degraded further into small acid-soluble oligonucleotides. This chain is Exodeoxyribonuclease 7 small subunit, found in Mycobacterium bovis (strain ATCC BAA-935 / AF2122/97).